The sequence spans 353 residues: Transcription factor MafA (353 aa).

At S14 the chain carries Phosphoserine. Residue K32 forms a Glycyl lysine isopeptide (Lys-Gly) (interchain with G-Cter in SUMO2) linkage. Disordered regions lie at residues 40–108 (RFCH…GGTS) and 177–219 (ADDM…GAGH). Residues 46–73 (PPGSLSSTPLSTPCSSVPSSPSFCAPSP) are compositionally biased toward low complexity. Phosphoserine is present on S49. Phosphothreonine occurs at positions 53 and 57. Phosphoserine occurs at positions 61 and 65. Gly residues predominate over residues 74–93 (GTGGGGGAGGGGGSSQAGGA). Basic residues predominate over residues 183-210 (GHHHGAHHAAHHHHAAHHHHHHHHHHGG). A basic motif region spans residues 254–279 (RLKQKRRTLKNRGYAQSCRFKRVQQR). Residues 254-317 (RLKQKRRTLK…DLYKEKYEKL (64 aa)) enclose the bZIP domain. A leucine-zipper region spans residues 282-303 (LESEKCQLQSQVEQLKLEVGRL). A disordered region spans residues 315-353 (EKLAGRGGPGSAGGAGFPREPSPPQAGPGGAKGTADFFL). Over residues 319 to 330 (GRGGPGSAGGAG) the composition is skewed to gly residues.

This sequence belongs to the bZIP family. Maf subfamily. As to quaternary structure, forms homodimers or heterodimers. Monomers and dimers are able to bind DNA, but the off-rate is faster for monomers. Interacts with NEUROD1 and PDX1. May interact with MAFB, FOS, JUN and PCAF. Post-translationally, ubiquitinated, leading to its degradation by the proteasome. In terms of processing, phosphorylated at tyrosines. Expressed in the islets of Langerhans (at protein level).

The protein localises to the nucleus. Its function is as follows. Transcription factor that activates insulin gene expression. Acts synergistically with NEUROD1/BETA2 and PDX1. Binds the insulin enhancer C1/RIPE3b element. Binds to consensus TRE-type MARE 5'-TGCTGACTCAGCA-3' DNA sequence. This Homo sapiens (Human) protein is Transcription factor MafA (MAFA).